The primary structure comprises 524 residues: GMP synthase [glutamine-hydrolyzing] (524 aa).

In terms of domain architecture, Glutamine amidotransferase type-1 spans 12 to 201; the sequence is TILVLDFGSQ…AVDICKASQS (190 aa). The active-site Nucleophile is the Cys88. Active-site residues include His175 and Glu177. Residues 202 to 399 form the GMPS ATP-PPase domain; the sequence is WNMENFIDTE…LGISHELVWR (198 aa). Residue 230-236 coordinates ATP; sequence SGGVDST. XMP is bound by residues Arg303, Asp461, Lys516, and Glu522.

Homodimer. Requires Mg(2+) as cofactor.

It is found in the cytoplasm. It localises to the cytosol. It catalyses the reaction XMP + L-glutamine + ATP + H2O = GMP + L-glutamate + AMP + diphosphate + 2 H(+). It participates in purine metabolism; GMP biosynthesis; GMP from XMP (L-Gln route): step 1/1. In terms of biological role, catalyzes the conversion of xanthine monophosphate (XMP) to GMP in the presence of glutamine and ATP through an adenyl-XMP intermediate. In Kluyveromyces lactis (strain ATCC 8585 / CBS 2359 / DSM 70799 / NBRC 1267 / NRRL Y-1140 / WM37) (Yeast), this protein is GMP synthase [glutamine-hydrolyzing] (GUA1).